We begin with the raw amino-acid sequence, 290 residues long: Phosphoribosylaminoimidazole-succinocarboxamide synthase (290 aa).

The protein belongs to the SAICAR synthetase family.

The enzyme catalyses 5-amino-1-(5-phospho-D-ribosyl)imidazole-4-carboxylate + L-aspartate + ATP = (2S)-2-[5-amino-1-(5-phospho-beta-D-ribosyl)imidazole-4-carboxamido]succinate + ADP + phosphate + 2 H(+). The protein operates within purine metabolism; IMP biosynthesis via de novo pathway; 5-amino-1-(5-phospho-D-ribosyl)imidazole-4-carboxamide from 5-amino-1-(5-phospho-D-ribosyl)imidazole-4-carboxylate: step 1/2. The chain is Phosphoribosylaminoimidazole-succinocarboxamide synthase (purC) from Haemophilus influenzae (strain ATCC 51907 / DSM 11121 / KW20 / Rd).